The sequence spans 336 residues: MAKVYYEKDVTVNVLKEKKVAIIGYGSQGHAHAQNLRDNGFDVVVGLRKGKSWDKAKEDGFSVYTVAEAAKQADVVMILLPDELQPEVYEEEIAPNLQAGNSLVFAHGFNVHFDQVKPPVNVDVFLVAPKGPGHLVRRTFSEGGAVPALFAVYQDATGVATEKALSYADGIGATRAGVLETTFKEETETDLFGEQAVLCGGVTALVKAGFETLVDAGYQPELAYFECLHELKLIVDLMYEGGLENMRYSVSDTAQWGDFVSGPRVVTEDTKKAMGTVLAEIQDGTFARGWIAEHKAGKPNFYATNEKENEHEIEVVGRKLRGMMPFVQPRVKAGVK.

The KARI N-terminal Rossmann domain maps to 2-181 (AKVYYEKDVT…GATRAGVLET (180 aa)). Residues 25-28 (YGSQ), Arg-48, Ser-52, and 82-85 (DELQ) each bind NADP(+). Residue His-107 is part of the active site. Gly-133 lines the NADP(+) pocket. One can recognise a KARI C-terminal knotted domain in the interval 182-327 (TFKEETETDL…RKLRGMMPFV (146 aa)). Residues Asp-190, Glu-194, Glu-226, and Glu-230 each contribute to the Mg(2+) site. A substrate-binding site is contributed by Ser-251.

This sequence belongs to the ketol-acid reductoisomerase family. The cofactor is Mg(2+).

The enzyme catalyses (2R)-2,3-dihydroxy-3-methylbutanoate + NADP(+) = (2S)-2-acetolactate + NADPH + H(+). It catalyses the reaction (2R,3R)-2,3-dihydroxy-3-methylpentanoate + NADP(+) = (S)-2-ethyl-2-hydroxy-3-oxobutanoate + NADPH + H(+). Its pathway is amino-acid biosynthesis; L-isoleucine biosynthesis; L-isoleucine from 2-oxobutanoate: step 2/4. The protein operates within amino-acid biosynthesis; L-valine biosynthesis; L-valine from pyruvate: step 2/4. Functionally, involved in the biosynthesis of branched-chain amino acids (BCAA). Catalyzes an alkyl-migration followed by a ketol-acid reduction of (S)-2-acetolactate (S2AL) to yield (R)-2,3-dihydroxy-isovalerate. In the isomerase reaction, S2AL is rearranged via a Mg-dependent methyl migration to produce 3-hydroxy-3-methyl-2-ketobutyrate (HMKB). In the reductase reaction, this 2-ketoacid undergoes a metal-dependent reduction by NADPH to yield (R)-2,3-dihydroxy-isovalerate. This is Ketol-acid reductoisomerase (NADP(+)) 1 from Bacillus anthracis.